Consider the following 3432-residue polypeptide: Genome polyprotein (3432 aa).

The tract at residues Thr2–Asn15 is interaction with host EXOC1. The Cytoplasmic segment spans residues Thr2–Glu109. Residues Leu37 to Val72 form a hydrophobic; homodimerization of capsid protein C region. A propeptide spans Gly106–Ala127 (ER anchor for the capsid protein C, removed in mature form by serine protease NS3). A helical transmembrane segment spans residues Ser110 to Leu130. The Extracellular portion of the chain corresponds to Ser131 to Asn253. Asn142 is a glycosylation site (N-linked (GlcNAc...) asparagine; by host). A helical transmembrane segment spans residues Trp254–Ser274. At Asn275 to Arg279 the chain is on the cytoplasmic side. Residues Val280–Ser294 form a helical membrane-spanning segment. Residues Phe295–Leu746 lie on the Extracellular side of the membrane. Intrachain disulfides connect Cys297–Cys324, Cys354–Cys410, Cys354–Cys415, Cys368–Cys399, Cys386–Cys410, and Cys386–Cys415. Residues Asp392–Gly405 are fusion peptide. Residue Asn448 is glycosylated (N-linked (GlcNAc...) asparagine; by host). Disulfide bonds link Cys484–Cys581 and Cys598–Cys629. The helical transmembrane segment at Phe747–Val767 threads the bilayer. Topologically, residues Asn768–Ser773 are cytoplasmic. A helical membrane pass occupies residues Ile774–Ala794. At Asp795–Asp1219 the chain is on the extracellular side. 6 disulfide bridges follow: Cys798–Cys809, Cys849–Cys937, Cys973–Cys1017, Cys1074–Cys1123, Cys1085–Cys1106, and Cys1107–Cys1110. N-linked (GlcNAc...) asparagine; by host glycans are attached at residues Asn924 and Asn1001. A helical membrane pass occupies residues Val1220–Met1240. Residues Leu1241–Asn1250 lie on the Cytoplasmic side of the membrane. The chain crosses the membrane as a helical span at residues Met1251–Val1271. His1272 is a topological domain (lumenal). A helical membrane pass occupies residues Gly1273–Thr1293. Over Ser1294–Arg1309 the chain is Cytoplasmic. Residues Ala1310–Gln1330 traverse the membrane as a helical segment. The Lumenal portion of the chain corresponds to Glu1331–Gly1341. Residues Ala1342–Ala1362 traverse the membrane as a helical segment. Over Gly1363–Gly1374 the chain is Cytoplasmic. The chain crosses the membrane as a helical span at residues Trp1375 to Ala1395. At Glu1396–Asp1398 the chain is on the lumenal side. Residues Ile1399–Ser1419 traverse the membrane as a helical segment. Residues Gly1420–Ser1476 lie on the Cytoplasmic side of the membrane. Positions Leu1427–Val1466 are interacts with and activates NS3 protease. Positions Cys1477–Leu1497 form an intramembrane region, helical. Topologically, residues Thr1498–Ala2173 are cytoplasmic. A Peptidase S7 domain is found at Gly1505–Ala1682. Catalysis depends on charge relay system; for serine protease NS3 activity residues His1555, Asp1579, and Ser1639. The Helicase ATP-binding domain maps to Pro1685–Gln1841. The tract at residues Lys1689–Gln1692 is important for RNA-binding. Leu1698–Thr1705 provides a ligand contact to ATP. The DEAH box signature appears at Asp1789–His1792. A Helicase C-terminal domain is found at Gly1852–Glu2017. Lys1893 is modified (N6-acetyllysine; by host). Positions Asn1950–Asn1969 are disordered. The segment at Glu2168–Asp2172 is regulates the ATPase activity of NS3 helicase. Residues Leu2174–Met2194 form a helical membrane-spanning segment. The Lumenal portion of the chain corresponds to Met2195–Gly2199. The segment at residues Ile2200–Ala2220 is an intramembrane region (helical). Glu2221 is a topological domain (lumenal). The chain crosses the membrane as a helical span at residues Val2222–Ile2242. The Cytoplasmic portion of the chain corresponds to Pro2243–Ala2257. Residues Val2258–Leu2278 form a helical membrane-spanning segment. The Lumenal portion of the chain corresponds to Glu2279–Ala2311. An intramembrane region (helical) is located at residues Thr2312–Ile2332. At Thr2333 to Gly2368 the chain is on the lumenal side. A helical transmembrane segment spans residues Leu2369–Leu2389. The Cytoplasmic portion of the chain corresponds to Val2390–Lys2444. A helical membrane pass occupies residues Val2445–Thr2465. Over Thr2466–Glu2469 the chain is Lumenal. Residues Ala2470–Trp2490 form a helical membrane-spanning segment. Over Asn2491–Ile3432 the chain is Cytoplasmic. Positions Gly2528 to Ala2793 constitute an mRNA cap 0-1 NS5-type MT domain. S-adenosyl-L-methionine is bound at residue Ser2583. Position 2583 is a phosphoserine (Ser2583). Lys2588 serves as the catalytic For 2'-O-MTase activity. S-adenosyl-L-methionine is bound by residues Gly2613, Trp2614, Thr2631, Lys2632, Asp2658, and Val2659. The For 2'-O-MTase activity role is filled by Asp2673. Ile2674 contributes to the S-adenosyl-L-methionine binding site. Active-site for 2'-O-MTase activity residues include Lys2709 and Glu2745. An S-adenosyl-L-methionine-binding site is contributed by Tyr2747. Zn(2+) contacts are provided by Glu2967, His2971, Cys2976, and Cys2979. The 153-residue stretch at Gly3057–Ala3209 folds into the RdRp catalytic domain. His3244, Cys3260, and Cys3379 together coordinate Zn(2+).

It in the N-terminal section; belongs to the class I-like SAM-binding methyltransferase superfamily. mRNA cap 0-1 NS5-type methyltransferase family. Homodimer. Interacts (via N-terminus) with host EXOC1 (via C-terminus); this interaction results in EXOC1 degradation through the proteasome degradation pathway. As to quaternary structure, forms heterodimers with envelope protein E in the endoplasmic reticulum and Golgi. In terms of assembly, homodimer; in the endoplasmic reticulum and Golgi. Interacts with protein prM. Interacts with non-structural protein 1. Interacts with host HSPA5. Homodimer; Homohexamer when secreted. Interacts with envelope protein E. NS1 interacts with NS4B. Interacts with host complement protein CFH; this interaction leads to the degradation of C3. As to quaternary structure, interacts (via N-terminus) with serine protease NS3. In terms of assembly, forms a heterodimer with serine protease NS3. May form homooligomers. Forms a heterodimer with NS2B. Interacts with non-structural protein 2A (via N-terminus). Interacts with NS4B. Interacts with unphosphorylated RNA-directed RNA polymerase NS5; this interaction stimulates RNA-directed RNA polymerase NS5 guanylyltransferase activity. Interacts with host ILF2. As to quaternary structure, interacts with serine protease NS3. In terms of assembly, homodimer. Interacts with host STAT2; this interaction inhibits the phosphorylation of the latter, and, when all viral proteins are present (polyprotein), targets STAT2 for degradation. Interacts with serine protease NS3. Requires Mn(2+) as cofactor. Mg(2+) serves as cofactor. In terms of processing, specific enzymatic cleavages in vivo yield mature proteins. Cleavages in the lumen of endoplasmic reticulum are performed by host signal peptidase, whereas cleavages in the cytoplasmic side are performed by serine protease NS3. Signal cleavage at the 2K-4B site requires a prior NS3 protease-mediated cleavage at the 4A-2K site. Post-translationally, cleaved in post-Golgi vesicles by a host furin, releasing the mature small envelope protein M, and peptide pr. This cleavage is incomplete as up to 30% of viral particles still carry uncleaved prM. N-glycosylated. In terms of processing, N-glycosylated. The excreted form is glycosylated and this is required for efficient secretion of the protein from infected cells. Post-translationally, acetylated by host KAT5. Acetylation modulates NS3 RNA-binding and unwinding activities and plays an important positive role for viral replication. Phosphorylated on serines residues. This phosphorylation may trigger NS5 nuclear localization.

It localises to the host endoplasmic reticulum membrane. Its subcellular location is the virion. It is found in the host nucleus. The protein resides in the host cytoplasm. The protein localises to the host perinuclear region. It localises to the secreted. Its subcellular location is the virion membrane. It is found in the host cell surface. The enzyme catalyses Selective hydrolysis of -Xaa-Xaa-|-Yaa- bonds in which each of the Xaa can be either Arg or Lys and Yaa can be either Ser or Ala.. It carries out the reaction a ribonucleoside 5'-triphosphate + H2O = a ribonucleoside 5'-diphosphate + phosphate + H(+). The catalysed reaction is RNA(n) + a ribonucleoside 5'-triphosphate = RNA(n+1) + diphosphate. It catalyses the reaction ATP + H2O = ADP + phosphate + H(+). The enzyme catalyses a 5'-end (5'-triphosphoguanosine)-ribonucleoside in mRNA + S-adenosyl-L-methionine = a 5'-end (N(7)-methyl 5'-triphosphoguanosine)-ribonucleoside in mRNA + S-adenosyl-L-homocysteine. It carries out the reaction a 5'-end (N(7)-methyl 5'-triphosphoguanosine)-ribonucleoside in mRNA + S-adenosyl-L-methionine = a 5'-end (N(7)-methyl 5'-triphosphoguanosine)-(2'-O-methyl-ribonucleoside) in mRNA + S-adenosyl-L-homocysteine + H(+). Its function is as follows. Plays a role in virus budding by binding to the cell membrane and gathering the viral RNA into a nucleocapsid that forms the core of a mature virus particle. During virus entry, may induce genome penetration into the host cytoplasm after hemifusion induced by the surface proteins. Can migrate to the cell nucleus where it modulates host functions. Overcomes the anti-viral effects of host EXOC1 by sequestering and degrading the latter through the proteasome degradation pathway. Functionally, inhibits RNA silencing by interfering with host Dicer. In terms of biological role, prevents premature fusion activity of envelope proteins in trans-Golgi by binding to envelope protein E at pH6.0. After virion release in extracellular space, gets dissociated from E dimers. Acts as a chaperone for envelope protein E during intracellular virion assembly by masking and inactivating envelope protein E fusion peptide. prM is the only viral peptide matured by host furin in the trans-Golgi network probably to avoid catastrophic activation of the viral fusion activity in acidic Golgi compartment prior to virion release. prM-E cleavage is inefficient, and many virions are only partially matured. These uncleaved prM would play a role in immune evasion. Its function is as follows. May play a role in virus budding. Exerts cytotoxic effects by activating a mitochondrial apoptotic pathway through M ectodomain. May display a viroporin activity. Functionally, binds to host cell surface receptor and mediates fusion between viral and cellular membranes. Efficient virus attachment to cell is, at least in part, mediated by host HSPA5. Envelope protein is synthesized in the endoplasmic reticulum in the form of heterodimer with protein prM. They play a role in virion budding in the ER, and the newly formed immature particle is covered with 60 spikes composed of heterodimer between precursor prM and envelope protein E. The virion is transported to the Golgi apparatus where the low pH causes dissociation of PrM-E heterodimers and formation of E homodimers. prM-E cleavage is inefficient, and many virions are only partially matured. These uncleaved prM would play a role in immune evasion. In terms of biological role, involved in immune evasion, pathogenesis and viral replication. Once cleaved off the polyprotein, is targeted to three destinations: the viral replication cycle, the plasma membrane and the extracellular compartment. Essential for viral replication. Required for formation of the replication complex and recruitment of other non-structural proteins to the ER-derived membrane structures. Excreted as a hexameric lipoparticle that plays a role against host immune response. Antagonizing the complement function. Binds to the host macrophages and dendritic cells. Inhibits signal transduction originating from Toll-like receptor 3 (TLR3). Component of the viral RNA replication complex that functions in virion assembly and antagonizes the host alpha/beta interferon antiviral response. Its function is as follows. Required cofactor for the serine protease function of NS3. May have membrane-destabilizing activity and form viroporins. Functionally, displays three enzymatic activities: serine protease, NTPase and RNA helicase. NS3 serine protease, in association with NS2B, performs its autocleavage and cleaves the polyprotein at dibasic sites in the cytoplasm: C-prM, NS2A-NS2B, NS2B-NS3, NS3-NS4A, NS4A-2K and NS4B-NS5. NS3 RNA helicase binds RNA and unwinds dsRNA in the 3' to 5' direction. In terms of biological role, regulates the ATPase activity of the NS3 helicase activity. NS4A allows NS3 helicase to conserve energy during unwinding. Functions as a signal peptide for NS4B and is required for the interferon antagonism activity of the latter. Its function is as follows. Induces the formation of ER-derived membrane vesicles where the viral replication takes place. Inhibits interferon (IFN)-induced host STAT1 phosphorylation and nuclear translocation, thereby preventing the establishment of cellular antiviral state by blocking the IFN-alpha/beta pathway. Inhibits STAT2 translocation in the nucleus after IFN-alpha treatment. Functionally, replicates the viral (+) and (-) RNA genome. Performs the capping of genomes in the cytoplasm. NS5 methylates viral RNA cap at guanine N-7 and ribose 2'-O positions. Besides its role in RNA genome replication, also prevents the establishment of cellular antiviral state by blocking the interferon-alpha/beta (IFN-alpha/beta) signaling pathway. Inhibits host TYK2 and STAT2 phosphorylation, thereby preventing activation of JAK-STAT signaling pathway. The protein is Genome polyprotein of Japanese encephalitis virus (strain M28) (JEV).